We begin with the raw amino-acid sequence, 467 residues long: Tubulointerstitial nephritis antigen-like (467 aa).

The signal sequence occupies residues 1–21; the sequence is MWGCPLGLLLLLLAGQAALEA. The SMB domain maps to 49–96; sequence EQDMCCRGRADECALPYLGATCYCDLFCNRTVSDCCPDFWDFCLGIPP. 5 cysteine pairs are disulfide-bonded: Cys-53-Cys-72, Cys-70-Cys-72, Cys-70-Cys-84, Cys-76-Cys-83, and Cys-84-Cys-91. N-linked (GlcNAc...) asparagine glycosylation is present at Asn-77. The N-linked (GlcNAc...) asparagine glycan is linked to Asn-160.

Belongs to the peptidase C1 family. In terms of processing, glycosylated.

The protein localises to the secreted. Its function is as follows. May be implicated in the adrenocortical zonation and in mechanisms for repressing the CYP11B1 gene expression in adrenocortical cells. This is a non catalytic peptidase C1 family protein. The sequence is that of Tubulointerstitial nephritis antigen-like (Tinagl1) from Rattus norvegicus (Rat).